The following is a 462-amino-acid chain: Phosphoglycerate kinase, chloroplastic (462 aa).

The N-terminal 61 residues, 1–61 (MALSMKMRAN…AGRSRIVVEA (61 aa)), are a transit peptide targeting the chloroplast. Alanine 83, aspartate 84, asparagine 86, arginine 101, serine 123, histidine 124, glycine 126, arginine 127, arginine 183, histidine 215, and arginine 216 together coordinate (2R)-3-phosphoglycerate. Position 261 (glycine 261) interacts with ADP. Residue glycine 261 coordinates CDP. Residues lysine 263 and lysine 267 each coordinate AMP. An ATP-binding site is contributed by lysine 267. Glycine 285 provides a ligand contact to ADP. Glycine 285 lines the CDP pocket. Residues glycine 286 and glycine 358 each coordinate AMP. ATP contacts are provided by glycine 286 and glycine 358. The CDP site is built by glycine 383 and phenylalanine 388. Phenylalanine 388 contacts ADP. Glutamate 389 is a binding site for AMP. Glutamate 389, aspartate 420, and serine 421 together coordinate ATP. Mg(2+) is bound at residue aspartate 420.

This sequence belongs to the phosphoglycerate kinase family. In terms of assembly, monomer. The cofactor is Mg(2+).

It localises to the plastid. The protein resides in the chloroplast. It carries out the reaction (2R)-3-phosphoglycerate + ATP = (2R)-3-phospho-glyceroyl phosphate + ADP. The protein operates within carbohydrate biosynthesis; Calvin cycle. This chain is Phosphoglycerate kinase, chloroplastic (PGK), found in Volvox carteri (Green alga).